Consider the following 461-residue polypeptide: Argininosuccinate lyase (461 aa).

The protein belongs to the lyase 1 family. Argininosuccinate lyase subfamily.

Its subcellular location is the cytoplasm. The catalysed reaction is 2-(N(omega)-L-arginino)succinate = fumarate + L-arginine. It participates in amino-acid biosynthesis; L-arginine biosynthesis; L-arginine from L-ornithine and carbamoyl phosphate: step 3/3. This is Argininosuccinate lyase from Aeromonas hydrophila subsp. hydrophila (strain ATCC 7966 / DSM 30187 / BCRC 13018 / CCUG 14551 / JCM 1027 / KCTC 2358 / NCIMB 9240 / NCTC 8049).